Reading from the N-terminus, the 418-residue chain is MSMFFYLFLLVLGLQATIHCAPHNSSEGKVTTCHLPQQNATLYKMPSINADFAFRLYRKLSVENPDLNIFFSPVSISAALAMLSFGSGSSTQTQILEVLGFNLTDTPVKELQQGFQHLICSLNFPNNELELQMGNAVFIGQQLKPLAKFLDDVKTLYETEVFSTDFSNVSAAQHEINSYVEKQTKGKIVGLIQDLKLNIIMILVNYIHFKAQWANPFRVSKTEESSNFSVDKSTTVQVPMMHQLEQYYHYVDVELNCTVLQMDYSANALALFVLPKEGHMEWVEAAMSSKTLKKWNHLLQKGWVELFVPKFSISATYDLGSTLQKMGMRDAFAESADFPGITKDNGLKLSYAFHKAVLHIGEEGTKEGASPEAGSLDQPEVAPLHAVIRLDRTFLLMILEKRTRSVLFLGKVVDPTKE.

An N-terminal signal peptide occupies residues 1–20; that stretch reads MSMFFYLFLLVLGLQATIHC. N-linked (GlcNAc...) asparagine glycans are attached at residues Asn24, Asn39, Asn102, Asn168, Asn227, and Asn256. Residues Asn296 and Lys401 each coordinate thyroxine.

Belongs to the serpin family. As to expression, expressed by the liver and secreted in plasma.

It is found in the secreted. Functionally, major thyroid hormone transport protein in serum. This Rattus norvegicus (Rat) protein is Thyroxine-binding globulin (Serpina7).